A 202-amino-acid polypeptide reads, in one-letter code: Recombination protein RecR (202 aa).

Residues 61–76 (CARCNSFTEDEVCATC) form a C4-type zinc finger. The 96-residue stretch at 84-179 (GLLCIVETPA…KVTRLARGVP (96 aa)) folds into the Toprim domain.

This sequence belongs to the RecR family.

Functionally, may play a role in DNA repair. It seems to be involved in an RecBC-independent recombinational process of DNA repair. It may act with RecF and RecO. This is Recombination protein RecR from Bordetella bronchiseptica (strain ATCC BAA-588 / NCTC 13252 / RB50) (Alcaligenes bronchisepticus).